A 165-amino-acid chain; its full sequence is Large ribosomal subunit protein uL10 (165 aa).

This sequence belongs to the universal ribosomal protein uL10 family. Part of the ribosomal stalk of the 50S ribosomal subunit. The N-terminus interacts with L11 and the large rRNA to form the base of the stalk. The C-terminus forms an elongated spine to which L12 dimers bind in a sequential fashion forming a multimeric L10(L12)X complex.

Forms part of the ribosomal stalk, playing a central role in the interaction of the ribosome with GTP-bound translation factors. The sequence is that of Large ribosomal subunit protein uL10 from Cronobacter sakazakii (strain ATCC BAA-894) (Enterobacter sakazakii).